The chain runs to 105 residues: Pyrimidine/purine nucleoside phosphorylase (105 aa).

It belongs to the nucleoside phosphorylase PpnP family.

It catalyses the reaction a purine D-ribonucleoside + phosphate = a purine nucleobase + alpha-D-ribose 1-phosphate. The enzyme catalyses adenosine + phosphate = alpha-D-ribose 1-phosphate + adenine. It carries out the reaction cytidine + phosphate = cytosine + alpha-D-ribose 1-phosphate. The catalysed reaction is guanosine + phosphate = alpha-D-ribose 1-phosphate + guanine. It catalyses the reaction inosine + phosphate = alpha-D-ribose 1-phosphate + hypoxanthine. The enzyme catalyses thymidine + phosphate = 2-deoxy-alpha-D-ribose 1-phosphate + thymine. It carries out the reaction uridine + phosphate = alpha-D-ribose 1-phosphate + uracil. The catalysed reaction is xanthosine + phosphate = alpha-D-ribose 1-phosphate + xanthine. Its function is as follows. Catalyzes the phosphorolysis of diverse nucleosides, yielding D-ribose 1-phosphate and the respective free bases. Can use uridine, adenosine, guanosine, cytidine, thymidine, inosine and xanthosine as substrates. Also catalyzes the reverse reactions. This Cupriavidus necator (strain ATCC 17699 / DSM 428 / KCTC 22496 / NCIMB 10442 / H16 / Stanier 337) (Ralstonia eutropha) protein is Pyrimidine/purine nucleoside phosphorylase.